The primary structure comprises 361 residues: Probable cinnamyl alcohol dehydrogenase (361 aa).

Cysteine 48 contributes to the Zn(2+) binding site. Threonine 50 serves as a coordination point for NADP(+). Zn(2+) contacts are provided by histidine 70, glutamate 71, cysteine 101, cysteine 104, cysteine 107, cysteine 115, and cysteine 164. NADP(+) contacts are provided by residues threonine 168, glycine 189–glycine 194, serine 212–lysine 217, threonine 252, glycine 276, and serine 299–isoleucine 301.

It belongs to the zinc-containing alcohol dehydrogenase family. In terms of assembly, homodimer. Zn(2+) serves as cofactor.

It carries out the reaction (E)-cinnamyl alcohol + NADP(+) = (E)-cinnamaldehyde + NADPH + H(+). The enzyme catalyses (E)-coniferol + NADP(+) = (E)-coniferaldehyde + NADPH + H(+). The catalysed reaction is (E)-sinapyl alcohol + NADP(+) = (E)-sinapaldehyde + NADPH + H(+). It catalyses the reaction (E)-4-coumaroyl alcohol + NADP(+) = (E)-4-coumaraldehyde + NADPH + H(+). It carries out the reaction (E)-caffeyl alcohol + NADP(+) = (E)-caffeyl aldehyde + NADPH + H(+). It functions in the pathway aromatic compound metabolism; phenylpropanoid biosynthesis. Functionally, involved in lignin biosynthesis. Catalyzes the final step specific for the production of lignin monomers. Catalyzes the NADPH-dependent reduction of coniferaldehyde, 5-hydroxyconiferaldehyde, sinapaldehyde, 4-coumaraldehyde and caffeyl aldehyde to their respective alcohols. The sequence is that of Probable cinnamyl alcohol dehydrogenase from Lolium perenne (Perennial ryegrass).